Reading from the N-terminus, the 374-residue chain is Formylglycine-generating enzyme (374 aa).

The first 33 residues, 1–33 (MAAPALGPARGCGAELTLVLLLSLFLLLGWAAG), serve as a signal peptide directing secretion. A disulfide bond links C50 and C52. The tract at residues 57–102 (RPGAQGSSAAAHRYSREANAPGSVPGGRPSPPTKMVPIPAGVFTMG) is disordered. A Ca(2+)-binding site is contributed by E130. The N-linked (GlcNAc...) asparagine glycan is linked to N141. 2 disulfide bridges follow: C218–C365 and C235–C346. The Ca(2+) site is built by N259, I260, D273, F275, N293, G296, A298, and E300. The Cu(2+) site is built by C336 and C341. The interaction with sulfatases stretch occupies residues 341–360 (CYRYRCAARSQNTPDSSASN).

This sequence belongs to the sulfatase-modifying factor family. As to quaternary structure, monomer, homodimer and heterodimer with SUMF2. The cofactor is Cu(2+). In terms of processing, N-glycosylated. Contains high-mannose-type oligosaccharides.

The protein localises to the endoplasmic reticulum lumen. It carries out the reaction L-cysteinyl-[sulfatase] + 2 a thiol + O2 = an organic disulfide + 3-oxo-L-alanyl-[sulfatase] + hydrogen sulfide + H2O + H(+). Its pathway is protein modification; sulfatase oxidation. Oxidase that catalyzes the conversion of cysteine to 3-oxoalanine on target proteins, using molecular oxygen and an unidentified reducing agent. 3-oxoalanine modification, which is also named formylglycine (fGly), occurs in the maturation of arylsulfatases and some alkaline phosphatases that use the hydrated form of 3-oxoalanine as a catalytic nucleophile. Known substrates include GALNS, ARSA, STS and ARSE. This chain is Formylglycine-generating enzyme, found in Bos taurus (Bovine).